A 30-amino-acid chain; its full sequence is LIM and SH3 domain protein 1 (30 aa).

Met-1 is subject to N-acetylmethionine. Residues Cys-5–Phe-30 form the LIM zinc-binding domain.

As to quaternary structure, interacts with F-actin. Interacts with ANKRD54. Interacts with KBTBD10. Post-translationally, phosphorylated.

The protein localises to the cytoplasm. Its subcellular location is the cell cortex. The protein resides in the cytoskeleton. Its function is as follows. Plays an important role in the regulation of dynamic actin-based, cytoskeletal activities. Agonist-dependent changes in LASP1 phosphorylation may also serve to regulate actin-associated ion transport activities, not only in the parietal cell but also in certain other F-actin-rich secretory epithelial cell types. The sequence is that of LIM and SH3 domain protein 1 (LASP1) from Sus scrofa (Pig).